The sequence spans 204 residues: Methylthioribulose-1-phosphate dehydratase (204 aa).

The Zn(2+) site is built by H94 and H96.

The protein belongs to the aldolase class II family. MtnB subfamily. It depends on Zn(2+) as a cofactor.

The enzyme catalyses 5-(methylsulfanyl)-D-ribulose 1-phosphate = 5-methylsulfanyl-2,3-dioxopentyl phosphate + H2O. It participates in amino-acid biosynthesis; L-methionine biosynthesis via salvage pathway; L-methionine from S-methyl-5-thio-alpha-D-ribose 1-phosphate: step 2/6. Functionally, catalyzes the dehydration of methylthioribulose-1-phosphate (MTRu-1-P) into 2,3-diketo-5-methylthiopentyl-1-phosphate (DK-MTP-1-P). The polypeptide is Methylthioribulose-1-phosphate dehydratase (Pseudomonas syringae pv. tomato (strain ATCC BAA-871 / DC3000)).